A 183-amino-acid chain; its full sequence is Ribosome maturation factor RimM (183 aa).

In terms of domain architecture, PRC barrel spans 104–183; that stretch reads EGDYYWKDLM…TIEVDWDPGF (80 aa).

It belongs to the RimM family. Binds ribosomal protein uS19.

Its subcellular location is the cytoplasm. Its function is as follows. An accessory protein needed during the final step in the assembly of 30S ribosomal subunit, possibly for assembly of the head region. Essential for efficient processing of 16S rRNA. May be needed both before and after RbfA during the maturation of 16S rRNA. It has affinity for free ribosomal 30S subunits but not for 70S ribosomes. The protein is Ribosome maturation factor RimM of Salmonella arizonae (strain ATCC BAA-731 / CDC346-86 / RSK2980).